Here is a 471-residue protein sequence, read N- to C-terminus: Putative multidrug resistance protein MdtD (471 aa).

At 1 to 11 (MTDLPDSTRWQ) the chain is on the periplasmic side. Residues 12 to 32 (LWIVAFGFFMQSLDTTIVNTA) traverse the membrane as a helical segment. Topologically, residues 33 to 48 (LPSMAQSLGESPLHMH) are cytoplasmic. Residues 49-69 (MVIVSYVLTVAVMLPASGWLA) form a helical membrane-spanning segment. Residues 70–76 (DKVGVRN) lie on the Periplasmic side of the membrane. The helical transmembrane segment at 77-97 (IFFTAIVLFTLGSLFCALSGT) threads the bilayer. At 98-101 (LNEL) the chain is on the cytoplasmic side. The chain crosses the membrane as a helical span at residues 102–124 (LLARALQGVGGAMMVPVGRLTVM). Topologically, residues 125–137 (KIVPREQYMAAMT) are periplasmic. A helical membrane pass occupies residues 138–158 (FVTLPGQVGPLLGPALGGLLV). Over 159–164 (EYASWH) the chain is Cytoplasmic. The helical transmembrane segment at 165–185 (WIFLINIPVGIIGAIATLMLM) threads the bilayer. At 186-196 (PNYTMQTRRFD) the chain is on the periplasmic side. The helical transmembrane segment at 197–217 (LSGFLLLAVGMAVLTLALDGS) threads the bilayer. Residues 218 to 224 (KGTGLSP) are Cytoplasmic-facing. The chain crosses the membrane as a helical span at residues 225-245 (LAIAGLVAVGVVALVLYLLHA). Topologically, residues 246-262 (RNNNRALFSLKLFRTRT) are periplasmic. A helical transmembrane segment spans residues 263–283 (FSLGLAGSFAGRIGSGMLPFM). The Cytoplasmic segment spans residues 284-285 (TP). The helical transmembrane segment at 286–306 (VFLQIGLGFSPFHAGLMMIPM) threads the bilayer. Topologically, residues 307–341 (VLGSMGMKRIVVQVVNRFGYRRVLVATTLGLSLVT) are periplasmic. The chain crosses the membrane as a helical span at residues 342–362 (MLFMTTALLGWYYVLPFVLFL). Residues 363–395 (QGMVNSTRFSSMNTLTLKDLPDNLASSGNSLLS) lie on the Cytoplasmic side of the membrane. A helical membrane pass occupies residues 396 to 416 (MIMQLSMSIGVTIAGLLLGLF). Residues 417–430 (GSQHVSVDSGTTQT) are Periplasmic-facing. Residues 431–451 (VFMYTWLSMAFIIALPAFIFA) traverse the membrane as a helical segment. The Cytoplasmic segment spans residues 452–471 (RVPNDTHQNVAISRRKRSAQ).

The protein belongs to the major facilitator superfamily. TCR/Tet family.

It localises to the cell inner membrane. This is Putative multidrug resistance protein MdtD from Escherichia coli O7:K1 (strain IAI39 / ExPEC).